Here is a 235-residue protein sequence, read N- to C-terminus: Adapter protein MecA (235 aa).

Basic and acidic residues predominate over residues 113–135; sequence LRQSDKGDIVKSKVSSSDHKDGS. Positions 113–136 are disordered; that stretch reads LRQSDKGDIVKSKVSSSDHKDGSQ.

The protein belongs to the MecA family. In terms of assembly, homodimer.

Enables the recognition and targeting of unfolded and aggregated proteins to the ClpC protease or to other proteins involved in proteolysis. This is Adapter protein MecA from Leuconostoc mesenteroides subsp. mesenteroides (strain ATCC 8293 / DSM 20343 / BCRC 11652 / CCM 1803 / JCM 6124 / NCDO 523 / NBRC 100496 / NCIMB 8023 / NCTC 12954 / NRRL B-1118 / 37Y).